The primary structure comprises 681 residues: uncharacterized protein (681 aa).

The protein belongs to the protein kinase superfamily. ADCK protein kinase family.

This is an uncharacterized protein from Synechocystis sp. (strain ATCC 27184 / PCC 6803 / Kazusa).